An 888-amino-acid polypeptide reads, in one-letter code: Serine/arginine repetitive matrix protein 1 (888 aa).

One can recognise a PWI domain in the interval 27-126 (QLKFAECLEK…AGIPTAFLEL (100 aa)). Residues 139–169 (EKLASMKKQDEDKEKRDKEDKDNREKRDRSR) are compositionally biased toward basic and acidic residues. The disordered stretch occupies residues 139-888 (EKLASMKKQD…MRKAQVSPPS (750 aa)). The span at 170 to 206 (SPRRRKSRSPSPRRRSSPIRRERKRSHSRSPHHRTKS) shows a compositional bias: basic residues. Basic and acidic residues-rich tracts occupy residues 213-232 (PEKK…KETV) and 254-276 (ETKE…EKTR). Basic residues-rich tracts occupy residues 277-325 (QRSP…RTPP) and 332-347 (PRHR…RRRS). 2 stretches are compositionally biased toward low complexity: residues 348–364 (SASL…SRSR) and 473–496 (SVQQ…SSSS). 2 stretches are compositionally biased toward basic residues: residues 528–554 (PRKR…RRRS) and 561–585 (PRRR…RSPS). Over residues 586 to 598 (PRRYSPPIQRRYS) the composition is skewed to low complexity. 2 stretches are compositionally biased toward basic residues: residues 614 to 629 (PKRR…RRVS) and 642 to 656 (AKRR…HRKG). The segment covering 662–677 (SNRETRSPPQNKRDSP) has biased composition (basic and acidic residues). Low complexity-rich tracts occupy residues 697-712 (ASAS…PSTR), 728-749 (ASTP…SGSP), and 763-775 (ARSR…WSPA). Positions 780–790 (SPTQSPSPARN) are enriched in polar residues. Basic residues predominate over residues 798–823 (KKKKKKKDKKHKKDKKHKKHKKHKKE). Positions 826–843 (AVAAAPAAVAAADTTSAQ) are enriched in low complexity. The span at 866–876 (DLEKHLREKAL) shows a compositional bias: basic and acidic residues.

Belongs to the splicing factor SR family.

Its subcellular location is the nucleus. In terms of biological role, involved in pre-mRNA splicing and processing events. This Gallus gallus (Chicken) protein is Serine/arginine repetitive matrix protein 1 (SRRM1).